The chain runs to 196 residues: Phosphoheptose isomerase (196 aa).

The SIS domain occupies 36-196 (MVACLMNEGK…AVDYMLLGGD (161 aa)). 51-53 (NGG) contacts substrate. Zn(2+) contacts are provided by His-60 and Glu-64. Residues Glu-64, 93-94 (ND), 119-121 (STS), Ser-124, and Gln-174 each bind substrate. Zn(2+)-binding residues include Gln-174 and His-182.

It belongs to the SIS family. GmhA subfamily. In terms of assembly, homotetramer. Zn(2+) is required as a cofactor.

Its subcellular location is the cytoplasm. The catalysed reaction is 2 D-sedoheptulose 7-phosphate = D-glycero-alpha-D-manno-heptose 7-phosphate + D-glycero-beta-D-manno-heptose 7-phosphate. The protein operates within carbohydrate biosynthesis; D-glycero-D-manno-heptose 7-phosphate biosynthesis; D-glycero-alpha-D-manno-heptose 7-phosphate and D-glycero-beta-D-manno-heptose 7-phosphate from sedoheptulose 7-phosphate: step 1/1. Its function is as follows. Catalyzes the isomerization of sedoheptulose 7-phosphate in D-glycero-D-manno-heptose 7-phosphate. This chain is Phosphoheptose isomerase, found in Laribacter hongkongensis (strain HLHK9).